The chain runs to 310 residues: 4-diphosphocytidyl-2-C-methyl-D-erythritol kinase (310 aa).

Lysine 10 is a catalytic residue. Residue proline 102–alanine 112 coordinates ATP. Aspartate 144 is an active-site residue. Residues threonine 289–alanine 310 form a disordered region.

It belongs to the GHMP kinase family. IspE subfamily.

The catalysed reaction is 4-CDP-2-C-methyl-D-erythritol + ATP = 4-CDP-2-C-methyl-D-erythritol 2-phosphate + ADP + H(+). The protein operates within isoprenoid biosynthesis; isopentenyl diphosphate biosynthesis via DXP pathway; isopentenyl diphosphate from 1-deoxy-D-xylulose 5-phosphate: step 3/6. Functionally, catalyzes the phosphorylation of the position 2 hydroxy group of 4-diphosphocytidyl-2C-methyl-D-erythritol. The polypeptide is 4-diphosphocytidyl-2-C-methyl-D-erythritol kinase (Cutibacterium acnes (strain DSM 16379 / KPA171202) (Propionibacterium acnes)).